The sequence spans 89 residues: Prostaglandin E2 receptor EP3 subtype (89 aa).

Residues 1–18 (GVWLAVLAFALLPVLGVG) form a helical membrane-spanning segment. Topologically, residues 19 to 48 (QYTIQWPGTWCFISTGPGGNGTNSRQNWGN) are extracellular. Asparagine 38 carries N-linked (GlcNAc...) asparagine glycosylation. Residues 49 to 74 (VFFASDFAILGLSALVVTFACNLATI) form a helical membrane-spanning segment. Residues 75 to 89 (KALVSRCRAKATASQ) lie on the Cytoplasmic side of the membrane.

It belongs to the G-protein coupled receptor 1 family. As to quaternary structure, interacts (via C-terminus) with MKLN1.

Its subcellular location is the cell membrane. In terms of biological role, receptor for prostaglandin E2 (PGE2). Required for normal development of fever in response to pyrinogens, including IL1B, prostaglandin E2 and bacterial lipopolysaccharide (LPS). Required for normal potentiation of platelet aggregation by prostaglandin E2, and thus plays a role in the regulation of blood coagulation. Required for increased HCO3(-) secretion in the duodenum in response to mucosal acidification, and thereby contributes to the protection of the mucosa against acid-induced ulceration. Not required for normal kidney function, normal urine volume and osmolality. The sequence is that of Prostaglandin E2 receptor EP3 subtype (PTGER3) from Ovis aries (Sheep).